The following is a 314-amino-acid chain: MKITSRKVVVIGTGFVGTSIAYSMINQGLVNELVLIDVNQDKAEGEALDLLDGVSWGQENVIVRAGDYKDCKNADIVVVTAGVNQKPGQSRLDLVNTNAKIMRSIVTQVMDSGFDGIFVIASNPVDILTYVAWETSGLDQSRIVGTGTTLDTTRFRKELATKLEIDPRSVHGYIIGEHGDSEVAVWSHTTVGGKPILEFIVKNKKIGVEDLSNLSNKVKNAAYEIIDKKQATYYGIGMSTARIVKAILNNEQAILPVSAYLRGEYGQEGVFTGVPSIVNQNGVREIIELNIDAYEKKQFEKSVSQLKEVIESIK.

NAD(+)-binding positions include Val16, Asp37, Lys42, Tyr68, and 82-83; that span reads GV. Positions 85 and 91 each coordinate substrate. NAD(+) is bound by residues Ser104, 121–123, and Thr146; that span reads ASN. 123–126 is a binding site for substrate; it reads NPVD. Substrate is bound at residue 151-154; that stretch reads DTTR. Beta-D-fructose 1,6-bisphosphate contacts are provided by Arg156 and His171. Catalysis depends on His178, which acts as the Proton acceptor. The residue at position 223 (Tyr223) is a Phosphotyrosine. Residue Thr232 coordinates substrate.

It belongs to the LDH/MDH superfamily. LDH family. As to quaternary structure, homotetramer.

It is found in the cytoplasm. It carries out the reaction (S)-lactate + NAD(+) = pyruvate + NADH + H(+). It functions in the pathway fermentation; pyruvate fermentation to lactate; (S)-lactate from pyruvate: step 1/1. Its activity is regulated as follows. Allosterically activated by fructose 1,6-bisphosphate (FBP). Functionally, catalyzes the conversion of lactate to pyruvate. The chain is L-lactate dehydrogenase 2 from Lactococcus lactis subsp. lactis (strain IL1403) (Streptococcus lactis).